The following is a 336-amino-acid chain: Histidinol-phosphate aminotransferase (336 aa).

At K204 the chain carries N6-(pyridoxal phosphate)lysine.

It belongs to the class-II pyridoxal-phosphate-dependent aminotransferase family. Histidinol-phosphate aminotransferase subfamily. The cofactor is pyridoxal 5'-phosphate.

It carries out the reaction L-histidinol phosphate + 2-oxoglutarate = 3-(imidazol-4-yl)-2-oxopropyl phosphate + L-glutamate. Its pathway is amino-acid biosynthesis; L-histidine biosynthesis; L-histidine from 5-phospho-alpha-D-ribose 1-diphosphate: step 7/9. The sequence is that of Histidinol-phosphate aminotransferase from Thermococcus kodakarensis (strain ATCC BAA-918 / JCM 12380 / KOD1) (Pyrococcus kodakaraensis (strain KOD1)).